The following is a 474-amino-acid chain: Gamma-aminobutyric acid receptor subunit gamma-2 (474 aa).

The signal sequence occupies residues 1–38 (MSSPNTWSIGSSVYSPVFSQKMTLWILLLLSLYPGFTS). Topologically, residues 39 to 274 (QKSDDDYEDY…FDLSRRMGYF (236 aa)) are extracellular. N-linked (GlcNAc...) asparagine glycans are attached at residues Asn51 and Asn128. Residues Cys189 and Cys203 are joined by a disulfide bond. Asn246 carries an N-linked (GlcNAc...) asparagine glycan. The helical transmembrane segment at 275-295 (TIQTYIPCTLIVVLSWVSFWI) threads the bilayer. At 296–301 (NKDAVP) the chain is on the cytoplasmic side. Residues 302–321 (ARTSLGITTVLTMTTLSTIA) form a helical membrane-spanning segment. Topologically, residues 322 to 333 (RKSLPKVSYVTA) are extracellular. A helical transmembrane segment spans residues 334–358 (MDLFVSVCFIFVFSALVEYGTLHYF). Topologically, residues 359 to 450 (VSNRKPSKDK…IHIRIAKMDS (92 aa)) are cytoplasmic. Ser381 bears the Phosphoserine; by PKC mark. A helical transmembrane segment spans residues 451–472 (YARIFFPTAFCLFNLVYWVSYL). The Extracellular portion of the chain corresponds to 473 to 474 (YL).

The protein belongs to the ligand-gated ion channel (TC 1.A.9) family. Gamma-aminobutyric acid receptor (TC 1.A.9.5) subfamily. GABRG2 sub-subfamily. In terms of assembly, heteropentamer, formed by a combination of alpha (GABRA1-6), beta (GABRB1-3), gamma (GABRG1-3), delta (GABRD), epsilon (GABRE), rho (GABRR1-3), pi (GABRP) and theta (GABRQ) chains, each subunit exhibiting distinct physiological and pharmacological properties. Interacts with GABARAP. Interacts with KIF21B. Identified in a complex of 720 kDa composed of LHFPL4, NLGN2, GABRA1, GABRB2, GABRG2 and GABRB3. Interacts with LHFPL4. Interacts with SHISA7; interaction leads to the regulation of GABA(A) receptor trafficking, channel deactivation kinetics and pharmacology. In terms of processing, glycosylated. Palmitoylated by ZDHHC3/GODZ; required for the accumulation of GABA(A) receptors at the postsynaptic membrane of inhibitory GABAergic synapses. Expressed in brain neurons (at protein level).

It is found in the postsynaptic cell membrane. It localises to the cell membrane. The protein localises to the cell projection. Its subcellular location is the dendrite. The protein resides in the cytoplasmic vesicle membrane. It carries out the reaction chloride(in) = chloride(out). With respect to regulation, allosterically activated by benzodiazepines. Activated by pentobarbital. Inhibited by the antagonist bicuculline. Inhibited by zinc ions. Potentiated by histamine. Gamma subunit of the heteropentameric ligand-gated chloride channel gated by gamma-aminobutyric acid (GABA), a major inhibitory neurotransmitter in the brain. GABA-gated chloride channels, also named GABA(A) receptors (GABAAR), consist of five subunits arranged around a central pore and contain GABA active binding site(s) located at the alpha and beta subunit interface(s). When activated by GABA, GABAARs selectively allow the flow of chloride anions across the cell membrane down their electrochemical gradient. Gamma-2/GABRG2-containing GABAARs are found at both synaptic and extrasynaptic sites. Chloride influx into the postsynaptic neuron following GABAAR opening decreases the neuron ability to generate a new action potential, thereby reducing nerve transmission. GABAARs containing alpha-1 and beta-2 or -3 subunits exhibit synaptogenic activity; the gamma-2 subunit being necessary but not sufficient to induce rapid synaptic contacts formation. Extrasynaptic gamma-2-containing receptors contribute to the tonic GABAergic inhibition. GABAARs function also as histamine receptor where histamine binds at the interface of two neighboring beta subunits and potentiates GABA response in a gamma-2 subunit-controlled manner. The sequence is that of Gamma-aminobutyric acid receptor subunit gamma-2 from Mus musculus (Mouse).